A 164-amino-acid chain; its full sequence is Endoribonuclease YbeY (164 aa).

The Zn(2+) site is built by His124, His128, and His134.

The protein belongs to the endoribonuclease YbeY family. Zn(2+) serves as cofactor.

The protein localises to the cytoplasm. Single strand-specific metallo-endoribonuclease involved in late-stage 70S ribosome quality control and in maturation of the 3' terminus of the 16S rRNA. This Nitrosomonas europaea (strain ATCC 19718 / CIP 103999 / KCTC 2705 / NBRC 14298) protein is Endoribonuclease YbeY.